A 393-amino-acid chain; its full sequence is Formate-dependent phosphoribosylglycinamide formyltransferase (393 aa).

N(1)-(5-phospho-beta-D-ribosyl)glycinamide contacts are provided by residues 22–23 (EL) and Glu-82. ATP contacts are provided by residues Arg-114, Lys-155, 160–165 (SSGKGQ), 195–198 (EGFI), and Glu-203. The region spanning 119 to 308 (RLAAEELDLP…QFALHARAIL (190 aa)) is the ATP-grasp domain. Mg(2+) is bound by residues Glu-267 and Glu-279. N(1)-(5-phospho-beta-D-ribosyl)glycinamide-binding positions include Asp-286, Lys-356, and 363 to 364 (RR).

It belongs to the PurK/PurT family. In terms of assembly, homodimer.

It catalyses the reaction N(1)-(5-phospho-beta-D-ribosyl)glycinamide + formate + ATP = N(2)-formyl-N(1)-(5-phospho-beta-D-ribosyl)glycinamide + ADP + phosphate + H(+). It participates in purine metabolism; IMP biosynthesis via de novo pathway; N(2)-formyl-N(1)-(5-phospho-D-ribosyl)glycinamide from N(1)-(5-phospho-D-ribosyl)glycinamide (formate route): step 1/1. Its function is as follows. Involved in the de novo purine biosynthesis. Catalyzes the transfer of formate to 5-phospho-ribosyl-glycinamide (GAR), producing 5-phospho-ribosyl-N-formylglycinamide (FGAR). Formate is provided by PurU via hydrolysis of 10-formyl-tetrahydrofolate. The protein is Formate-dependent phosphoribosylglycinamide formyltransferase of Pseudomonas entomophila (strain L48).